A 94-amino-acid polypeptide reads, in one-letter code: Lipolysis-activating peptide 1-beta chain (94 aa).

The first 19 residues, 1–19 (MKILAVVLISVIVLNTANG), serve as a signal peptide directing secretion. Positions 20–87 (ENYYPQKYTN…YFNALESQCP (68 aa)) constitute an LCN-type CS-alpha/beta domain. Disulfide bonds link Cys-34–Cys-56, Cys-42–Cys-66, and Cys-46–Cys-68.

Belongs to the long (3 C-C) scorpion toxin superfamily. In terms of assembly, homodimer; disulfide-linked or monomer (edited version) or heterodimer of an alpha chain (AC P0CI44 or AC P0CI45) and this beta chain (non-edited version). In terms of tissue distribution, expressed by the venom gland.

The protein resides in the secreted. In terms of biological role, the homodimer inhibits HMG-CoA reductase (HMGCR) (32% of inhibition produced by 0.6 uM), a glycoprotein involved in the control of cholesterol biosynthesis. The inhibitory effects of bumarsin are seen at much lower concentrations (0.6 uM) than that for statins such as atorvastatin (5 mM) and simvastatin (10 uM). In addition to inhibition of HMG-CoA reductase, this protein lowers cholesterol levels by inducing steroid hormone synthesis via StAR, and by increasing reverse cholesterol transport mediated by the induction of ABCA1 and APOA1. Its function is as follows. The heterodimer non-edited LVP1 induces lipolysis in rat adipocytes. Induction of lipolysis by LVP1 appears to be mediated through the beta-2 adrenergic receptor pathway (ADRB2). Functionally, the monomer edited version, similar to alpha-toxins, may modulate voltage-gated sodium channels (Nav) and may block voltage-gated potassium channels (Kv). The chain is Lipolysis-activating peptide 1-beta chain from Lychas mucronatus (Chinese swimming scorpion).